Consider the following 259-residue polypeptide: Phosphonates import ATP-binding protein PhnC (259 aa).

The region spanning 4–245 (ISIQSVTKRF…ALRTIYQREG (242 aa)) is the ABC transporter domain. 37-44 (GPSGAGKS) serves as a coordination point for ATP.

The protein belongs to the ABC transporter superfamily. Phosphonates importer (TC 3.A.1.9.1) family. As to quaternary structure, the complex is composed of two ATP-binding proteins (PhnC), two transmembrane proteins (PhnE) and a solute-binding protein (PhnD).

It localises to the cell inner membrane. It catalyses the reaction phosphonate(out) + ATP + H2O = phosphonate(in) + ADP + phosphate + H(+). Part of the ABC transporter complex PhnCDE involved in phosphonates import. Responsible for energy coupling to the transport system. The sequence is that of Phosphonates import ATP-binding protein PhnC from Thiobacillus denitrificans (strain ATCC 25259 / T1).